Reading from the N-terminus, the 71-residue chain is Omega-conotoxin-like CnVIIF (71 aa).

3 disulfide bridges follow: cysteine 46–cysteine 61, cysteine 53–cysteine 65, and cysteine 60–cysteine 70. Cysteine 70 carries the post-translational modification Cysteine amide; in CnVIID.

The protein belongs to the conotoxin M superfamily. In terms of tissue distribution, expressed by the venom duct.

The protein localises to the secreted. Omega-conotoxins act at presynaptic membranes, they bind and block voltage-gated calcium channels (Cav). This is Omega-conotoxin-like CnVIIF from Conus consors (Singed cone).